The primary structure comprises 209 residues: Mitochondrial import inner membrane translocase subunit Tim23 (209 aa).

The next 3 membrane-spanning stretches (helical) occupy residues F73–M93, A125–I145, and G172–Y194.

This sequence belongs to the Tim17/Tim22/Tim23 family. As to quaternary structure, component of the TIM23 complex at least composed of TIMM23, TIMM17 (TIMM17A or TIMM17B) and TIMM50; within this complex, directly interacts with TIMM50. The complex interacts with the TIMM44 component of the PAM complex and with DNAJC15. Upon mitochondrial depolarization, interacts with PINK1; the interaction is required for PINK1 accumulation at the outer mitochondrial membrane, kinase activation by autophosphorylation and PRKN recruitement to mitochondria.

Its subcellular location is the mitochondrion inner membrane. Essential component of the TIM23 complex, a complex that mediates the translocation of transit peptide-containing proteins across the mitochondrial inner membrane. Has a role in the activation of stress-induced mitophagy by protecting PINK1 from OMA1-mediated degradation and facilitating its accumulation at the outer mitochondrial membrane in response to depolarization. This chain is Mitochondrial import inner membrane translocase subunit Tim23 (TIMM23), found in Bos taurus (Bovine).